Here is a 636-residue protein sequence, read N- to C-terminus: 1-deoxy-D-xylulose-5-phosphate synthase (636 aa).

Residues histidine 72 and glycine 113–alanine 115 contribute to the thiamine diphosphate site. Aspartate 144 is a Mg(2+) binding site. Residues glycine 145–alanine 146, asparagine 174, tyrosine 287, and glutamate 370 contribute to the thiamine diphosphate site. Asparagine 174 contributes to the Mg(2+) binding site.

Belongs to the transketolase family. DXPS subfamily. As to quaternary structure, homodimer. It depends on Mg(2+) as a cofactor. Requires thiamine diphosphate as cofactor.

The enzyme catalyses D-glyceraldehyde 3-phosphate + pyruvate + H(+) = 1-deoxy-D-xylulose 5-phosphate + CO2. The protein operates within metabolic intermediate biosynthesis; 1-deoxy-D-xylulose 5-phosphate biosynthesis; 1-deoxy-D-xylulose 5-phosphate from D-glyceraldehyde 3-phosphate and pyruvate: step 1/1. Functionally, catalyzes the acyloin condensation reaction between C atoms 2 and 3 of pyruvate and glyceraldehyde 3-phosphate to yield 1-deoxy-D-xylulose-5-phosphate (DXP). This is 1-deoxy-D-xylulose-5-phosphate synthase from Crocosphaera subtropica (strain ATCC 51142 / BH68) (Cyanothece sp. (strain ATCC 51142)).